The following is a 559-amino-acid chain: Urocanate hydratase (559 aa).

NAD(+) is bound by residues 53–54 (GG), Gln131, 177–179 (GMG), Glu197, Arg202, 243–244 (NA), 264–268 (QTSAH), 274–275 (YL), and Tyr323. The active site involves Cys411. Position 493 (Gly493) interacts with NAD(+).

The protein belongs to the urocanase family. Requires NAD(+) as cofactor.

Its subcellular location is the cytoplasm. It catalyses the reaction 4-imidazolone-5-propanoate = trans-urocanate + H2O. It functions in the pathway amino-acid degradation; L-histidine degradation into L-glutamate; N-formimidoyl-L-glutamate from L-histidine: step 2/3. In terms of biological role, catalyzes the conversion of urocanate to 4-imidazolone-5-propionate. The sequence is that of Urocanate hydratase from Pseudomonas aeruginosa (strain LESB58).